The sequence spans 321 residues: ATP-dependent 6-phosphofructokinase (321 aa).

Gly-10 is an ATP binding site. 20 to 24 lines the ADP pocket; the sequence is RAVVR. Residues 71–72 and 101–104 each bind ATP; these read RD and GEGT. Glu-102 is a binding site for Mg(2+). 125-127 is a substrate binding site; sequence TID. Asp-127 serves as the catalytic Proton acceptor. ADP is bound at residue Arg-154. Residues Arg-162 and 169–171 each bind substrate; that span reads MGR. ADP is bound by residues 185–187 and 213–215; these read GAE and KLH. Substrate is bound by residues Glu-222, Arg-246, and 252-255; that span reads HIQR.

Belongs to the phosphofructokinase type A (PFKA) family. ATP-dependent PFK group I subfamily. Prokaryotic clade 'B1' sub-subfamily. In terms of assembly, homotetramer. Mg(2+) is required as a cofactor.

Its subcellular location is the cytoplasm. It catalyses the reaction beta-D-fructose 6-phosphate + ATP = beta-D-fructose 1,6-bisphosphate + ADP + H(+). Its pathway is carbohydrate degradation; glycolysis; D-glyceraldehyde 3-phosphate and glycerone phosphate from D-glucose: step 3/4. With respect to regulation, allosterically activated by ADP and other diphosphonucleosides, and allosterically inhibited by phosphoenolpyruvate. Catalyzes the phosphorylation of D-fructose 6-phosphate to fructose 1,6-bisphosphate by ATP, the first committing step of glycolysis. The polypeptide is ATP-dependent 6-phosphofructokinase (Aquifex aeolicus (strain VF5)).